The chain runs to 43 residues: Iota-conotoxin-like S11.2 (43 aa).

4 cysteine pairs are disulfide-bonded: Cys-2/Cys-16, Cys-9/Cys-19, Cys-15/Cys-24, and Cys-18/Cys-35. Met-41 carries the D-methionine modification. Position 43 (Arg-43) is a propeptide, removed by a carboxypeptidase.

It belongs to the conotoxin I1 superfamily. In terms of tissue distribution, expressed by the venom duct.

It localises to the secreted. Functionally, iota-conotoxins bind to voltage-gated sodium channels (Nav) and act as agonists by shifting the voltage-dependence of activation to more hyperpolarized levels. Produces general excitatory symptoms. This Conus striatus (Striated cone) protein is Iota-conotoxin-like S11.2.